Here is a 3507-residue protein sequence, read N- to C-terminus: Dynein axonemal heavy chain 14 (3507 aa).

Residues 91-126 (PHLPGTQDPLRRVRDPTPIVASSPGRRRGSWSGGYG) are disordered. Positions 354 to 381 (DEFCEEQLQQATQALKQLEDIRNKAISE) form a coiled coil. The GPAGTGKT motif motif lies at 1164-1171 (GPAGTGKT). Residues 1164–1171 (GPAGTGKT) and 1427–1434 (GPTGGGKT) contribute to the ATP site. N-linked (GlcNAc...) asparagine glycosylation occurs at N1818.

The protein belongs to the dynein heavy chain family. As to quaternary structure, consists of at least two heavy chains and a number of intermediate and light chains.

Its subcellular location is the cytoplasm. The protein localises to the cytoskeleton. It is found in the cilium axoneme. Force generating protein of respiratory cilia. Produces force towards the minus ends of microtubules. Dynein has ATPase activity; the force-producing power stroke is thought to occur on release of ADP. Involved in sperm motility; implicated in sperm flagellar assembly. This is Dynein axonemal heavy chain 14 (DNAH14) from Homo sapiens (Human).